We begin with the raw amino-acid sequence, 739 residues long: G2 and S phase-expressed protein 1 (739 aa).

Residues 1–11 (MEGGGGRDEPS) are compositionally biased toward basic and acidic residues. Residues 1–20 (MEGGGGRDEPSACRAGDVNM) form a disordered region. Ser91 carries the post-translational modification Phosphoserine. Disordered stretches follow at residues 116 to 136 (SRNQ…GVER), 149 to 306 (EKEK…AIPV), and 320 to 639 (PGST…GDAA). Residues 149 to 165 (EKEKEMKKSPTSLKRET) show a composition bias toward basic and acidic residues. The residue at position 157 (Ser157) is a Phosphoserine. At Thr159 the chain carries Phosphothreonine. Ser171, Ser187, Ser208, Ser247, and Ser262 each carry phosphoserine. Residues 181–195 (PRLLASSPALPSSGA) show a composition bias toward low complexity. The span at 268-280 (IPAEKESHRDVLP) shows a compositional bias: basic and acidic residues. Composition is skewed to low complexity over residues 284–294 (APGAVNVPAAG) and 330–342 (SSSG…ASSA). Ser331 carries the phosphoserine modification. Residues 360 to 372 (PANSSRPLSNISK) are compositionally biased toward polar residues. A compositionally biased stretch (low complexity) spans 411 to 424 (TAPPSASPTQPQTP). Composition is skewed to polar residues over residues 430–446 (WLNS…LNKT) and 455–470 (CLNS…TNQF). A Phosphoserine modification is found at Ser480. Polar residues predominate over residues 481 to 522 (PDSSTPKLSRAQRPQSCTSVGRVTVHSTPVRRSSGPAPQSLL). A Phosphothreonine modification is found at Thr485. Phosphoserine occurs at positions 496, 499, 514, 520, 523, and 528. Position 532 is a phosphothreonine (Thr532). Phosphoserine occurs at positions 535 and 555. Positions 577–590 (EPTRESNRKTDSRL) are enriched in basic and acidic residues. Ser594 and Ser611 each carry phosphoserine. Phosphothreonine is present on Thr696. 5 positions are modified to phosphoserine: Ser707, Ser717, Ser718, Ser724, and Ser734.

In terms of processing, phosphorylated in mitosis.

The protein localises to the cytoplasm. Its subcellular location is the cytoskeleton. Its function is as follows. May be involved in p53-induced cell cycle arrest in G2/M phase by interfering with microtubule rearrangements that are required to enter mitosis. Overexpression delays G2/M phase progression. The protein is G2 and S phase-expressed protein 1 of Homo sapiens (Human).